A 131-amino-acid chain; its full sequence is Protein GLUTAMINE DUMPER 5 (131 aa).

At M1 to Y34 the chain is on the extracellular side. A helical membrane pass occupies residues L35 to C55. Topologically, residues S56–H131 are cytoplasmic. The short motif at V88 to G92 is the VIMAG element.

Belongs to the GLUTAMINE DUMPER 1 (TC 9.B.60) family. Expressed in the vascular tissues. Also detected in guard cells.

The protein resides in the membrane. Its function is as follows. Probable subunit of an amino acid transporter involved in the regulation of the amino acid metabolism. Stimulates amino acid export by activating nonselective amino acid facilitators. This is Protein GLUTAMINE DUMPER 5 (GDU5) from Arabidopsis thaliana (Mouse-ear cress).